The sequence spans 130 residues: Flagellar assembly factor FliW (130 aa).

This sequence belongs to the FliW family. In terms of assembly, interacts with translational regulator CsrA and flagellin(s).

It localises to the cytoplasm. Acts as an anti-CsrA protein, binds CsrA and prevents it from repressing translation of its target genes, one of which is flagellin. Binds to flagellin and participates in the assembly of the flagellum. The protein is Flagellar assembly factor FliW of Clostridioides difficile (strain 630) (Peptoclostridium difficile).